The chain runs to 490 residues: GTPase Der (490 aa).

2 consecutive EngA-type G domains span residues 1-165 and 227-400; these read MRIA…QIPV and LKVA…TIAT. GTP contacts are provided by residues 7-14, 54-58, 117-120, 233-240, 280-284, and 345-348; these read GRPNVGKS, DTGGV, NKAD, GHPNVGKS, DTAGL, and NKWD. The KH-like domain maps to 401–485; that stretch reads TKLSTSLVNK…PFDLEYKAKP (85 aa).

The protein belongs to the TRAFAC class TrmE-Era-EngA-EngB-Septin-like GTPase superfamily. EngA (Der) GTPase family. As to quaternary structure, associates with the 50S ribosomal subunit.

Its function is as follows. GTPase that plays an essential role in the late steps of ribosome biogenesis. This is GTPase Der from Chlamydia trachomatis serovar L2b (strain UCH-1/proctitis).